A 249-amino-acid polypeptide reads, in one-letter code: Kallikrein-7 (249 aa).

Positions 1–21 (MGVWLLSLITVLLSLALETAG) are cleaved as a signal peptide. A propeptide spans 22 to 25 (QGER) (activation peptide). Positions 26–246 (IIDGYKCKEG…YKRWVMETMK (221 aa)) are serine protease. 6 disulfides stabilise this stretch: cysteine 32-cysteine 161, cysteine 51-cysteine 67, cysteine 133-cysteine 235, cysteine 140-cysteine 207, cysteine 172-cysteine 186, and cysteine 197-cysteine 222. Residues histidine 66 and aspartate 108 each act as charge relay system in the active site. Residue serine 201 is the Charge relay system of the active site.

It belongs to the peptidase S1 family. Kallikrein subfamily. Expressed in skin and, at lower levels, in lung, kidney, brain, heart and spleen. In skin, expressed in high suprabasal keratinocytes and in the luminal parts of hair follicles. Not detected in liver and skeletal muscle.

Its subcellular location is the secreted. The catalysed reaction is Cleavage of proteins with aromatic side chains in the P1 position.. Inhibited by Zn2+ and Cu2+ at low micromolar concentrations. Inhibited by SERPINA12. Functionally, may catalyze the degradation of intercellular cohesive structures in the cornified layer of the skin in the continuous shedding of cells from the skin surface. Specific for amino acid residues with aromatic side chains in the P1 position. Cleaves insulin A chain at '14-Tyr-|-Gln-15' and insulin B chain at '6-Leu-|-Cys-7', '16-Tyr-|-Leu-17', '25-Phe-|-Tyr-26' and '26-Tyr-|-Thr-27'. Could play a role in the activation of precursors to inflammatory cytokines. The protein is Kallikrein-7 (Klk7) of Mus musculus (Mouse).